Reading from the N-terminus, the 555-residue chain is Cilia- and flagella-associated protein 184 (555 aa).

Residues Met1–Gly12 are compositionally biased toward basic and acidic residues. Positions Met1–Tyr202 are disordered. Composition is skewed to acidic residues over residues Gly41–Gln54 and Pro95–Ala105. The segment covering Glu106–Pro117 has biased composition (low complexity). Residues Glu118–Gln131 show a composition bias toward acidic residues. Residues Glu174–Tyr202 show a composition bias toward basic and acidic residues. Coiled coils occupy residues Tyr305–Gln441 and Asp505–His531.

This sequence belongs to the CFAP184 family. Forms a complex with CFAP263; the interaction is required for functional activity in cilia.

It is found in the cell projection. Its subcellular location is the cilium. It localises to the cytoplasm. The protein resides in the cytoskeleton. The protein localises to the microtubule organizing center. It is found in the centrosome. Functionally, in complex with CFAP263, acts as a regulator of ciliary beating that connects radial spoke 3 (RS3) to the inner dynein arm (IDA) and the nexin-dynein regulatory complex (N-DRC). The complex is positioned parallel to N-DRC and forms a connection between the arch at the base of RS3, the IDA tail and N-DRC. The polypeptide is Cilia- and flagella-associated protein 184 (Homo sapiens (Human)).